A 99-amino-acid chain; its full sequence is Thylakoid membrane protein ssl2009 (99 aa).

The helical transmembrane segment at 10-30 (GFLLGTVIGGVVGGILGSVLA) threads the bilayer. A coiled-coil region spans residues 50-84 (NLDSEENIELARRRLEDKIAQLNLVIDDVRDQLGH).

Its subcellular location is the cellular thylakoid membrane. The sequence is that of Thylakoid membrane protein ssl2009 from Synechocystis sp. (strain ATCC 27184 / PCC 6803 / Kazusa).